The sequence spans 351 residues: Fructose-1,6-bisphosphatase class 1 1 (351 aa).

4 residues coordinate Mg(2+): glutamate 84, aspartate 106, leucine 108, and aspartate 109. Substrate-binding positions include 109–112 and asparagine 205; that span reads DGSS. Residue glutamate 277 coordinates Mg(2+).

It belongs to the FBPase class 1 family. As to quaternary structure, homotetramer. Requires Mg(2+) as cofactor.

Its subcellular location is the cytoplasm. The enzyme catalyses beta-D-fructose 1,6-bisphosphate + H2O = beta-D-fructose 6-phosphate + phosphate. It participates in carbohydrate biosynthesis; Calvin cycle. The chain is Fructose-1,6-bisphosphatase class 1 1 from Methylibium petroleiphilum (strain ATCC BAA-1232 / LMG 22953 / PM1).